The chain runs to 402 residues: Beta-ketoacyl-[acyl-carrier-protein] synthase III B, chloroplastic (402 aa).

Catalysis depends on residues cysteine 178, histidine 328, and asparagine 358.

The protein belongs to the thiolase-like superfamily. FabH family.

The protein resides in the plastid. Its subcellular location is the chloroplast. It carries out the reaction malonyl-[ACP] + acetyl-CoA + H(+) = 3-oxobutanoyl-[ACP] + CO2 + CoA. It functions in the pathway lipid metabolism; fatty acid biosynthesis. Functionally, catalyzes the condensation reaction of fatty acid synthesis by the addition to an acyl acceptor of two carbons from malonyl-ACP. KAS III catalyzes the first condensation reaction which initiates fatty acid synthesis and may therefore play a role in governing the total rate of fatty acid production. Possesses both acetoacetyl-ACP synthase and acetyl transacylase activities. The protein is Beta-ketoacyl-[acyl-carrier-protein] synthase III B, chloroplastic (KAS3B) of Cuphea wrightii (Wright's waxweed).